A 120-amino-acid polypeptide reads, in one-letter code: Large ribosomal subunit protein uL14 (120 aa).

Belongs to the universal ribosomal protein uL14 family. Part of the 50S ribosomal subunit. Forms a cluster with proteins L3 and L19. In the 70S ribosome, L14 and L19 interact and together make contacts with the 16S rRNA in bridges B5 and B8.

Its function is as follows. Binds to 23S rRNA. Forms part of two intersubunit bridges in the 70S ribosome. The sequence is that of Large ribosomal subunit protein uL14 from Dictyoglomus turgidum (strain DSM 6724 / Z-1310).